The following is a 185-amino-acid chain: Ribosome-recycling factor (185 aa).

This sequence belongs to the RRF family.

The protein resides in the cytoplasm. Functionally, responsible for the release of ribosomes from messenger RNA at the termination of protein biosynthesis. May increase the efficiency of translation by recycling ribosomes from one round of translation to another. This Ehrlichia ruminantium (strain Gardel) protein is Ribosome-recycling factor.